A 599-amino-acid polypeptide reads, in one-letter code: NADH-quinone oxidoreductase subunit C/D (599 aa).

Residues 1–189 (MTDLTTHDLA…DPFELTKQKE (189 aa)) form an NADH dehydrogenase I subunit C region. Residues 213 to 599 (DFMFLNLGPN…IDFVMSDVDR (387 aa)) form an NADH dehydrogenase I subunit D region.

The protein in the N-terminal section; belongs to the complex I 30 kDa subunit family. In the C-terminal section; belongs to the complex I 49 kDa subunit family. NDH-1 is composed of 13 different subunits. Subunits NuoB, CD, E, F, and G constitute the peripheral sector of the complex.

The protein resides in the cell inner membrane. It catalyses the reaction a quinone + NADH + 5 H(+)(in) = a quinol + NAD(+) + 4 H(+)(out). NDH-1 shuttles electrons from NADH, via FMN and iron-sulfur (Fe-S) centers, to quinones in the respiratory chain. The immediate electron acceptor for the enzyme in this species is believed to be ubiquinone. Couples the redox reaction to proton translocation (for every two electrons transferred, four hydrogen ions are translocated across the cytoplasmic membrane), and thus conserves the redox energy in a proton gradient. This is NADH-quinone oxidoreductase subunit C/D from Pectobacterium atrosepticum (strain SCRI 1043 / ATCC BAA-672) (Erwinia carotovora subsp. atroseptica).